An 864-amino-acid chain; its full sequence is Leucine--tRNA ligase (864 aa).

The 'HIGH' region signature appears at 42–52; sequence PYPSGKLHMGH. Residues 622 to 626 carry the 'KMSKS' region motif; sequence KMSKS. ATP is bound at residue Lys625.

Belongs to the class-I aminoacyl-tRNA synthetase family.

The protein localises to the cytoplasm. It catalyses the reaction tRNA(Leu) + L-leucine + ATP = L-leucyl-tRNA(Leu) + AMP + diphosphate. The protein is Leucine--tRNA ligase of Cellvibrio japonicus (strain Ueda107) (Pseudomonas fluorescens subsp. cellulosa).